A 573-amino-acid polypeptide reads, in one-letter code: Peptidyl-prolyl cis-trans isomerase-like 2 (573 aa).

Residues 37–119 (QRLPFDCCAL…GNLHDPITYK (83 aa)) enclose the U-box domain. The interval 223–247 (KNKSGQSPAPTPSKIDDGKGQEKKE) is disordered. Basic and acidic residues predominate over residues 236-247 (KIDDGKGQEKKE). A PPIase cyclophilin-type domain is found at 312-469 (SKAYATITTN…RDIVIQGVTV (158 aa)). The segment covering 489-510 (DQSDAALKRRAEAQKEREKDRT) has biased composition (basic and acidic residues). A disordered region spans residues 489–515 (DQSDAALKRRAEAQKEREKDRTTWLGT).

This sequence belongs to the cyclophilin-type PPIase family. PPIL2 subfamily.

It is found in the nucleus. It carries out the reaction [protein]-peptidylproline (omega=180) = [protein]-peptidylproline (omega=0). It catalyses the reaction S-ubiquitinyl-[E2 ubiquitin-conjugating enzyme]-L-cysteine + [acceptor protein]-L-lysine = [E2 ubiquitin-conjugating enzyme]-L-cysteine + N(6)-ubiquitinyl-[acceptor protein]-L-lysine.. Its pathway is protein modification; protein ubiquitination. Its function is as follows. May catalyze the cis-trans isomerization of proline imidic peptide bonds in oligopeptides thereby assisting the folding of proteins. May also function as a chaperone, playing a role in intracellular transport of proteins. May also have a protein ubiquitin ligase activity acting as an E3 ubiquitin protein ligase or as a ubiquitin-ubiquitin ligase promoting elongation of ubiquitin chains on proteins. The sequence is that of Peptidyl-prolyl cis-trans isomerase-like 2 (CYP8) from Cryptococcus neoformans var. neoformans serotype D (strain B-3501A) (Filobasidiella neoformans).